The primary structure comprises 441 residues: Inositol hexakisphosphate kinase 1 (441 aa).

The segment at 100 to 175 is disordered; it reads ETVEQDDTTE…MLDGNSGLSS (76 aa). Over residues 113–123 the composition is skewed to basic residues; that stretch reads PRRKHSRRSLH. The span at 137–149 shows a compositional bias: low complexity; it reads SLSLETSESSQEA. Residues 150–160 show a composition bias toward basic and acidic residues; the sequence is KSPKVELHSHS. S151 carries the post-translational modification Phosphoserine. 220–228 serves as a coordination point for substrate; that stretch reads PCVLDLKMG. A disordered region spans residues 370 to 392; that stretch reads SSCGPSTSPSNTSPEAGPSSQPK. Residues 372-391 show a composition bias toward polar residues; that stretch reads CGPSTSPSNTSPEAGPSSQP.

Belongs to the inositol phosphokinase (IPK) family.

It localises to the cytoplasm. It is found in the nucleus. The enzyme catalyses 1D-myo-inositol hexakisphosphate + ATP = 5-diphospho-1D-myo-inositol 1,2,3,4,6-pentakisphosphate + ADP. It carries out the reaction 1-diphospho-1D-myo-inositol 2,3,4,5,6-pentakisphosphate + ATP + H(+) = 1,5-bis(diphospho)-1D-myo-inositol 2,3,4,6-tetrakisphosphate + ADP. Its function is as follows. Converts inositol hexakisphosphate (InsP6) to diphosphoinositol pentakisphosphate (InsP7/PP-InsP5). Converts 1,3,4,5,6-pentakisphosphate (InsP5) to PP-InsP4. This Homo sapiens (Human) protein is Inositol hexakisphosphate kinase 1 (IP6K1).